The sequence spans 115 residues: Large ribosomal subunit protein bL19 (115 aa).

It belongs to the bacterial ribosomal protein bL19 family.

In terms of biological role, this protein is located at the 30S-50S ribosomal subunit interface and may play a role in the structure and function of the aminoacyl-tRNA binding site. The polypeptide is Large ribosomal subunit protein bL19 (Caldanaerobacter subterraneus subsp. tengcongensis (strain DSM 15242 / JCM 11007 / NBRC 100824 / MB4) (Thermoanaerobacter tengcongensis)).